A 944-amino-acid chain; its full sequence is Neutral alpha-glucosidase AB (944 aa).

Positions 1–28 are cleaved as a signal peptide; sequence MAAVAAVAARRRRSWASLVLAFLGVCLG. A disulfide bond links Cys41 and Cys47. Ser52 bears the Phosphoserine mark. The N-linked (GlcNAc...) asparagine glycan is linked to Asn97. The disordered stretch occupies residues 181–238; the sequence is QRAPRVSQGSKDPAEGDGAQPEETPRDGDKPEETQGKAEKDEPGAWEETFKTHSDSKP. The segment covering 203–236 has biased composition (basic and acidic residues); the sequence is ETPRDGDKPEETQGKAEKDEPGAWEETFKTHSDS. Residues Asp283 and Asp429 each coordinate substrate. Asp542 serves as the catalytic Nucleophile. Arg602 is a binding site for substrate. Asp618 acts as the Proton donor in catalysis. Cys633 and Cys644 are disulfide-bonded. Residue His676 coordinates substrate.

It belongs to the glycosyl hydrolase 31 family. In terms of assembly, heterodimer of a catalytic alpha subunit (GANAB) and a beta subunit (PRKCSH). Binds glycosylated PTPRC. In terms of tissue distribution, detected in placenta. Isoform 1 and isoform 2 are expressed in the kidney and liver.

Its subcellular location is the endoplasmic reticulum. It is found in the golgi apparatus. The protein resides in the melanosome. It catalyses the reaction N(4)-(alpha-D-Glc-(1-&gt;3)-alpha-D-Man-(1-&gt;2)-alpha-D-Man-(1-&gt;2)-alpha-D-Man-(1-&gt;3)-[alpha-D-Man-(1-&gt;2)-alpha-D-Man-(1-&gt;3)-[alpha-D-Man-(1-&gt;2)-alpha-D-Man-(1-&gt;6)]-alpha-D-Man-(1-&gt;6)]-beta-D-Man-(1-&gt;4)-beta-D-GlcNAc-(1-&gt;4)-beta-D-GlcNAc)-L-asparaginyl-[protein] + H2O = N(4)-(alpha-D-Man-(1-&gt;2)-alpha-D-Man-(1-&gt;2)-alpha-D-Man-(1-&gt;3)-[alpha-D-Man-(1-&gt;2)-alpha-D-Man-(1-&gt;3)-[alpha-D-Man-(1-&gt;2)-alpha-D-Man-(1-&gt;6)]-alpha-D-Man-(1-&gt;6)]-beta-D-Man-(1-&gt;4)-beta-D-GlcNAc-(1-&gt;4)-beta-D-GlcNAc)-L-asparaginyl-[protein] (N-glucan mannose isomer 9A1,2,3B1,2,3) + beta-D-glucose. The catalysed reaction is N(4)-(alpha-D-Glc-(1-&gt;3)-alpha-D-Glc-(1-&gt;3)-alpha-D-Man-(1-&gt;2)-alpha-D-Man-(1-&gt;2)-alpha-D-Man-(1-&gt;3)-[alpha-D-Man-(1-&gt;2)-alpha-D-Man-(1-&gt;3)-[alpha-D-Man-(1-&gt;2)-alpha-D-Man-(1-&gt;6)]-alpha-D-Man-(1-&gt;6)]-beta-D-Man-(1-&gt;4)-beta-D-GlcNAc-(1-&gt;4)-beta-D-GlcNAc)-L-asparaginyl-[protein] + H2O = N(4)-(alpha-D-Glc-(1-&gt;3)-alpha-D-Man-(1-&gt;2)-alpha-D-Man-(1-&gt;2)-alpha-D-Man-(1-&gt;3)-[alpha-D-Man-(1-&gt;2)-alpha-D-Man-(1-&gt;3)-[alpha-D-Man-(1-&gt;2)-alpha-D-Man-(1-&gt;6)]-alpha-D-Man-(1-&gt;6)]-beta-D-Man-(1-&gt;4)-beta-D-GlcNAc-(1-&gt;4)-beta-D-GlcNAc)-L-asparaginyl-[protein] + beta-D-glucose. It participates in glycan metabolism; N-glycan metabolism. With respect to regulation, inhibited by deoxynojirimycin. Functionally, catalytic subunit of glucosidase II that cleaves sequentially the 2 innermost alpha-1,3-linked glucose residues from the Glc(2)Man(9)GlcNAc(2) oligosaccharide precursor of immature glycoproteins. Required for PKD1/Polycystin-1 and PKD2/Polycystin-2 maturation and localization to the cell surface and cilia. The polypeptide is Neutral alpha-glucosidase AB (Homo sapiens (Human)).